A 252-amino-acid polypeptide reads, in one-letter code: NADH-quinone oxidoreductase subunit E (252 aa).

Residues Cys-114, Cys-119, Cys-155, and Cys-159 each coordinate [2Fe-2S] cluster. The tract at residues 211–252 (LAGLPDQRPDEGQGGPGAPTLAGLQVARKNDMQAPPTPGADE) is disordered.

It belongs to the complex I 24 kDa subunit family. The cofactor is [2Fe-2S] cluster.

It carries out the reaction a quinone + NADH + 5 H(+)(in) = a quinol + NAD(+) + 4 H(+)(out). Its function is as follows. NDH-1 shuttles electrons from NADH, via FMN and iron-sulfur (Fe-S) centers, to quinones in the respiratory chain. The immediate electron acceptor for the enzyme in this species is believed to be menaquinone. Couples the redox reaction to proton translocation (for every two electrons transferred, four hydrogen ions are translocated across the cytoplasmic membrane), and thus conserves the redox energy in a proton gradient. The protein is NADH-quinone oxidoreductase subunit E (nuoE) of Mycobacterium bovis (strain ATCC BAA-935 / AF2122/97).